Reading from the N-terminus, the 754-residue chain is MAEQWELDEEGIRRLGALTLEQPELVESLSLQGSYAGKIHSIGDAFRNFKNLRSLDLSRNLITSLKGIQYLCSLQDLNLYYNNIPSLVEVSRLQPLPFLKELDLRLNPVVRKDTDYRLFAVYTLQTLEKLDDRTVREGERKAAKLHFSQLGNSENFLLEVEKSSREKTMKNCVTGESSASKVSANVDSRIEMDSNKGLFIPFPNREIKDSLSTSATQGNGTRDQKLDTFPLGTQTQEVARREMPSDNHQEDEFRHYSPRQSTVRSPEKMTREGYQVSFLDNKSSGSSPEKELIPKPDTFHLTHDASLSKCLDVGDSSQIHPYQLPSDVGLENYDSCYSQTLSLHGSLGKRPQRSKNYQEYSIKPSNDIKTTASHSCGDLLTSLSNPDSSTGRLLKLSSDLYATTHFNSDPAVLVNVEQQLSTSLDDLTPAHGSVPNNAVLGNRTTPLRTLLLSPGTSEHRKIFTKRSLSPSKRGFKWKDNILANLNLKHGFQDATGSEPLSSDLGSLHGLAGNHSPPISARTPHVATVLRQLLELVDKHWNGSGSLLLNKKFLGPARDLLLSLVVPAPSQPRCCSHPEDTMKAFCRRELELKEAAQLVPNDMESLKQKLVRVLEENLILSEKIQQLEEGAAISIVSGQQSHTYDDLLHKNQQLTMQVACLNQELAQLKKLEKTVAILHESQRSLVVTNEYLLQQLNKEPKGYSGKALLPPEKGHHLGRSSPFGKSTLSSSSPVAHETGQYLIQSVLDAAPEPGL.

LRR repeat units follow at residues 51-72 (NLRSLDLSRNLITSLKGIQYLC) and 73-94 (SLQDLNLYYNNIPSLVEVSRLQ). The 40-residue stretch at 107 to 146 (NPVVRKDTDYRLFAVYTLQTLEKLDDRTVREGERKAAKLH) folds into the LRRCT domain. Residues 241 to 255 (REMPSDNHQEDEFRH) are compositionally biased toward basic and acidic residues. The tract at residues 241-270 (REMPSDNHQEDEFRHYSPRQSTVRSPEKMT) is disordered. Positions 600-680 (NDMESLKQKL…EKTVAILHES (81 aa)) form a coiled coil. Residues 702–734 (YSGKALLPPEKGHHLGRSSPFGKSTLSSSSPVA) form a disordered region. Over residues 722 to 732 (FGKSTLSSSSP) the composition is skewed to polar residues.

The sequence is that of Leucine-rich repeat-containing protein 36 (LRRC36) from Homo sapiens (Human).